The primary structure comprises 692 residues: Protein artemis (692 aa).

Thr380 carries the phosphothreonine modification. Position 385 is a phosphoserine (Ser385). Disordered regions lie at residues 504–555 and 640–664; these read LENF…DSQS and STNADSQSSSDFEVPSTPEAELPKR. A compositionally biased stretch (polar residues) spans 506-520; that stretch reads NFPSSTVAGGSQSPK. Residues 530–543 are compositionally biased toward low complexity; sequence THISSQNSSQSTHI. Polar residues-rich tracts occupy residues 544 to 555 and 640 to 650; these read TEQGSQGWDSQS and STNADSQSSSD. Position 645 is a phosphoserine; by ATM (Ser645).

Belongs to the DNA repair metallo-beta-lactamase (DRMBL) family. As to quaternary structure, interacts with LIG4; the interaction is direct. Interacts with ATM. Interacts with BRCA1. Interacts with PRKDC. Interacts with TP53BP1. Also exhibits ATM- and phosphorylation-dependent interaction with the MRN complex, composed of MRE11, RAD50, and NBN. Post-translationally, phosphorylation on undefined residues by PRKDC may stimulate endonucleolytic activity on 5' and 3' hairpins and overhangs. PRKDC must remain present, even after phosphorylation, for efficient hairpin opening. Also phosphorylated by ATM in response to ionizing radiation (IR) and by ATR in response to ultraviolet (UV) radiation. Ubiquitously expressed, with highest levels in the kidney, lung, pancreas and placenta (at the mRNA level). Expression is not increased in thymus or bone marrow, sites of V(D)J recombination.

It is found in the nucleus. In terms of biological role, nuclease involved in DNA non-homologous end joining (NHEJ); required for double-strand break repair and V(D)J recombination. Required for V(D)J recombination, the process by which exons encoding the antigen-binding domains of immunoglobulins and T-cell receptor proteins are assembled from individual V, (D), and J gene segments. V(D)J recombination is initiated by the lymphoid specific RAG endonuclease complex, which generates site specific DNA double strand breaks (DSBs). These DSBs present two types of DNA end structures: hairpin sealed coding ends and phosphorylated blunt signal ends. These ends are independently repaired by the non homologous end joining (NHEJ) pathway to form coding and signal joints respectively. This protein exhibits single-strand specific 5'-3' exonuclease activity in isolation and acquires endonucleolytic activity on 5' and 3' hairpins and overhangs when in a complex with PRKDC. The latter activity is required specifically for the resolution of closed hairpins prior to the formation of the coding joint. Also required for the repair of complex DSBs induced by ionizing radiation, which require substantial end-processing prior to religation by NHEJ. This is Protein artemis from Homo sapiens (Human).